The sequence spans 421 residues: ATP-dependent RNA helicase RhlB (421 aa).

Residues 9–37 carry the Q motif motif; it reads QKFSDFALHPQVVEALEKKGFYNCTPIQA. The Helicase ATP-binding domain maps to 40–219; the sequence is LPLTLAGRDV…FEQMNNAEYV (180 aa). 53 to 60 is a binding site for ATP; it reads AQTGTGKT. Residues 165–168 carry the DEAD box motif; it reads DEAD. Residues 245-390 enclose the Helicase C-terminal domain; the sequence is RLLQTLIEEE…VSKYNPEALM (146 aa). The disordered stretch occupies residues 396–421; it reads PLRLTRSRPGNGPRRAGAPRNRRRSG. The segment covering 402-414 has biased composition (low complexity); the sequence is SRPGNGPRRAGAP.

The protein belongs to the DEAD box helicase family. RhlB subfamily. Component of the RNA degradosome, which is a multiprotein complex involved in RNA processing and mRNA degradation.

Its subcellular location is the cytoplasm. It carries out the reaction ATP + H2O = ADP + phosphate + H(+). In terms of biological role, DEAD-box RNA helicase involved in RNA degradation. Has RNA-dependent ATPase activity and unwinds double-stranded RNA. In Salmonella agona (strain SL483), this protein is ATP-dependent RNA helicase RhlB.